Consider the following 236-residue polypeptide: Sugar fermentation stimulation protein homolog (236 aa).

The protein belongs to the SfsA family.

The protein is Sugar fermentation stimulation protein homolog of Gloeobacter violaceus (strain ATCC 29082 / PCC 7421).